We begin with the raw amino-acid sequence, 513 residues long: Probable histone deacetylase 19 (513 aa).

Residues 23–334 (RRVCYFYDPD…WCYETGVALG (312 aa)) are histone deacetylase. Catalysis depends on histidine 154, which acts as the Proton donor/acceptor. Residues aspartate 189, histidine 191, and aspartate 277 each contribute to the Zn(2+) site. Disordered regions lie at residues 384-432 (HAPS…ESSR) and 446-513 (ENAT…YHKP). The span at 398-409 (EIPEQDEDQDDP) shows a compositional bias: acidic residues. Over residues 410 to 432 (DERHDPDSDMEVDDHKAVEESSR) the composition is skewed to basic and acidic residues. Positions 492–504 (NVKNEPESSTKLQ) are enriched in polar residues.

This sequence belongs to the histone deacetylase family. HD type 1 subfamily. It depends on Zn(2+) as a cofactor.

It is found in the nucleus. It catalyses the reaction N(6)-acetyl-L-lysyl-[histone] + H2O = L-lysyl-[histone] + acetate. In terms of biological role, responsible for the deacetylation of lysine residues on the N-terminal part of the core histones (H2A, H2B, H3 and H4). Histone deacetylation gives a tag for epigenetic repression and plays an important role in transcriptional regulation, cell cycle progression and developmental events. Histone deacetylases act via the formation of large multiprotein complexes. The chain is Probable histone deacetylase 19 from Zea mays (Maize).